The primary structure comprises 150 residues: Large ribosomal subunit protein bL9 (150 aa).

This sequence belongs to the bacterial ribosomal protein bL9 family.

Binds to the 23S rRNA. This chain is Large ribosomal subunit protein bL9, found in Neisseria gonorrhoeae (strain ATCC 700825 / FA 1090).